The sequence spans 237 residues: Cysteine-rich venom protein DIS3 (237 aa).

The N-terminal stretch at 1–18 (MFVFILLSLAAVLQQSFG) is a signal peptide. The SCP domain occupies 37–165 (VDKHNAFRRS…SYDYFYVCQY (129 aa)). Disulfide bonds link Cys-74/Cys-152, Cys-91/Cys-166, Cys-147/Cys-163, Cys-185/Cys-192, Cys-188/Cys-197, Cys-201/Cys-234, and Cys-219/Cys-232. The ShKT domain maps to 201 to 234 (CSREDVFTNCKSLVAKSNCQDDYIRKNCLATCFC).

It belongs to the CRISP family. As to expression, expressed by the venom gland.

The protein localises to the secreted. Its function is as follows. Weakly blocks contraction of smooth muscle elicited by high potassium-induced depolarization, but does not block caffeine-stimulated contraction. May target voltage-gated calcium channels on smooth muscle. This chain is Cysteine-rich venom protein DIS3, found in Dispholidus typus (Boomslang).